Consider the following 712-residue polypeptide: Eukaryotic translation initiation factor 3 subunit B (712 aa).

Methionine 1 is subject to N-acetylmethionine. Positions asparagine 56 to aspartate 143 constitute an RRM domain.

This sequence belongs to the eIF-3 subunit B family. Component of the eukaryotic translation initiation factor 3 (eIF-3) complex, which is composed of at least 13 different subunits. Binds to the translation initiation factor TIF3H1.

Its subcellular location is the cytoplasm. RNA-binding component of the eukaryotic translation initiation factor 3 (eIF-3) complex, which is involved in protein synthesis of a specialized repertoire of mRNAs and, together with other initiation factors, stimulates binding of mRNA and methionyl-tRNAi to the 40S ribosome. The eIF-3 complex specifically targets and initiates translation of a subset of mRNAs involved in cell proliferation. The chain is Eukaryotic translation initiation factor 3 subunit B (TIF3B1) from Arabidopsis thaliana (Mouse-ear cress).